We begin with the raw amino-acid sequence, 161 residues long: Endoribonuclease YbeY (161 aa).

Positions 127, 131, and 137 each coordinate Zn(2+).

Belongs to the endoribonuclease YbeY family. The cofactor is Zn(2+).

It localises to the cytoplasm. In terms of biological role, single strand-specific metallo-endoribonuclease involved in late-stage 70S ribosome quality control and in maturation of the 3' terminus of the 16S rRNA. This chain is Endoribonuclease YbeY, found in Listeria monocytogenes serotype 4b (strain CLIP80459).